The sequence spans 312 residues: tRNA uridine(34) hydroxylase (312 aa).

The Rhodanese domain maps to 130 to 225; that stretch reads RGDEVVFFDG…YGEKFGNQGL (96 aa). C185 serves as the catalytic Cysteine persulfide intermediate.

The protein belongs to the TrhO family.

It carries out the reaction uridine(34) in tRNA + AH2 + O2 = 5-hydroxyuridine(34) in tRNA + A + H2O. Catalyzes oxygen-dependent 5-hydroxyuridine (ho5U) modification at position 34 in tRNAs. The sequence is that of tRNA uridine(34) hydroxylase from Corynebacterium efficiens (strain DSM 44549 / YS-314 / AJ 12310 / JCM 11189 / NBRC 100395).